A 343-amino-acid polypeptide reads, in one-letter code: Selenide, water dikinase (343 aa).

Residue Sec-15 is part of the active site. A non-standard amino acid (selenocysteine) is located at residue Sec-15. Residues Lys-18 and 45–47 each bind ATP; that span reads TAD. Asp-48 lines the Mg(2+) pocket. Residues Asp-65, Asp-88, and 135–137 contribute to the ATP site; that span reads GHT. Asp-88 contacts Mg(2+). Asp-223 is a binding site for Mg(2+).

The protein belongs to the selenophosphate synthase 1 family. Class I subfamily. Homodimer. Requires Mg(2+) as cofactor.

The catalysed reaction is hydrogenselenide + ATP + H2O = selenophosphate + AMP + phosphate + 2 H(+). Functionally, synthesizes selenophosphate from selenide and ATP. This Carboxydothermus hydrogenoformans (strain ATCC BAA-161 / DSM 6008 / Z-2901) protein is Selenide, water dikinase.